The chain runs to 841 residues: Translation initiation factor IF-2 (841 aa).

5 stretches are compositionally biased toward basic and acidic residues: residues 1–12 (MSDNEIKNEAPK), 52–92 (ALKA…EATK), 114–170 (EQPK…REEA), 188–202 (READRDNDRRSEANR), and 213–235 (KKGDREDKNERNADRRNQKDVKG). Disordered regions lie at residues 1–24 (MSDNEIKNEAPKKLSLQRRTKTTV) and 52–246 (ALKA…GSAL). The 171-residue stretch at 340-510 (TRAPVVTIMG…LLQSEVLELT (171 aa)) folds into the tr-type G domain. The segment at 349–356 (GHVDHGKT) is G1. 349 to 356 (GHVDHGKT) is a GTP binding site. The interval 374 to 378 (GITQH) is G2. The tract at residues 396 to 399 (DTPG) is G3. Residues 396–400 (DTPGH) and 450–453 (NKID) each bind GTP. Residues 450 to 453 (NKID) form a G4 region. A G5 region spans residues 486–488 (SAK).

This sequence belongs to the TRAFAC class translation factor GTPase superfamily. Classic translation factor GTPase family. IF-2 subfamily.

Its subcellular location is the cytoplasm. One of the essential components for the initiation of protein synthesis. Protects formylmethionyl-tRNA from spontaneous hydrolysis and promotes its binding to the 30S ribosomal subunits. Also involved in the hydrolysis of GTP during the formation of the 70S ribosomal complex. In Actinobacillus pleuropneumoniae serotype 5b (strain L20), this protein is Translation initiation factor IF-2.